The following is an 809-amino-acid chain: MPPSTSLLLLAALLPFALPASDWKTGEVTGKVVEKSEFPCYSLSRDNYTCSACIQYHESCAWCGAPMFDEKKPYARCDSRAKLMEHGCPNSYIEDPATKLDITEDSKLSDQGQVESEEEAVQIKPQEMYVEIRPKSRVRFNVTYRQAVDYPVDLYYLMDLSYSMKDDKQKLSELGDLLAERMRTVTKNFRLGFGSFIDKKLMPFIDPRIEKQLSPCPTPCAEPYGFKHQMSLTTNTAKFKAEVDKAEISGNLDAPEGGFDAVVQALACNKTIGWRERARKMIVFSTDAGFHFAGDGRLAGVVEPNDGTCHLDREGYYTETLNQDYPSIALLHQMIKDRKANVIFAVTKNNQDLYTQLSNALPDVSSSVGVLANDSRNIVDLIEKEYLKISEKIIMVDNANASEGLKLTYRSMCLDGTTLKDTNVCEGIRVGDEVQFEVTLENTHCIDKRDFVLRIGPSGLDETLIVNVKVLCDCDCERQDRIVTNSADCNGGDMVCGVCRCKGGNVGKYCECNRPGMSTAALNEKCKRTNESAICEGRGVCNCGRCECNPRANPEEQISGEFCECDNFNCPRHDRKICAEHGECNCGKCICAPGWTGRACECPISTDSCLSANGKICNGKGECICGRCRCFDSPDGNRYSGAKCEICPTCPTKCVEYKNCVMCQQWQTGPLNETACDQCEFKVIPVEELPNLNETTPCQFVDPADDCTFYYLYYYDEATDNATVWVRKHKDCPPPVPVLAIVLGVIAGIVILGILLLLLWKLLTVLHDRSEYATFNNERLMAKWDTNENPIYKQATTTFKNPVYAGKAN.

The first 19 residues, 1–19, serve as a signal peptide directing secretion; the sequence is MPPSTSLLLLAALLPFALP. Topologically, residues 20–737 are extracellular; it reads ASDWKTGEVT…KHKDCPPPVP (718 aa). N-linked (GlcNAc...) asparagine glycosylation is found at Asn47, Asn141, Asn269, Asn373, and Asn400. The VWFA domain maps to 153-352; that stretch reads DLYYLMDLSY…IFAVTKNNQD (200 aa). Cystine bridges form between Cys476-Cys496, Cys489-Cys499, Cys501-Cys510, Cys512-Cys543, Cys526-Cys541, Cys535-Cys546, Cys548-Cys563, Cys565-Cys586, Cys570-Cys584, Cys578-Cys589, Cys591-Cys600, Cys602-Cys625, Cys609-Cys623, Cys617-Cys628, and Cys630-Cys644. 4 consecutive I-EGF domains span residues 476 to 511, 512 to 564, 565 to 601, and 602 to 645; these read CERQ…KYCE, CNRP…EFCE, CDNF…RACE, and CPIS…AKCE. Asn530 is a glycosylation site (N-linked (GlcNAc...) asparagine). 3 N-linked (GlcNAc...) asparagine glycosylation sites follow: Asn672, Asn693, and Asn721. Residues 738–758 traverse the membrane as a helical segment; that stretch reads VLAIVLGVIAGIVILGILLLL. The Cytoplasmic segment spans residues 759–809; it reads LWKLLTVLHDRSEYATFNNERLMAKWDTNENPIYKQATTTFKNPVYAGKAN. Tyr792 is subject to Phosphotyrosine.

It belongs to the integrin beta chain family. As to quaternary structure, heterodimer of an alpha and a beta subunit. Interacts with alpha subunit ina-1. Interacts with alpha subunit pat-2. Component of an integrin containing attachment complex, composed of at least pat-2, pat-3, pat-4, pat-6, unc-52, unc-97 and unc-112. May interact with tns-1 (via C-terminus). Post-translationally, phosphorylated. Dephosphorylated by dep-1. In terms of tissue distribution, expressed in body wall muscles (at protein level). Expressed in gonadal sheath cells and spermatheca. Expressed in vulval cells and along the basal laminae that separate the vulval cells from the uterus (at the protein level).

It localises to the cell membrane. It is found in the lateral cell membrane. The protein localises to the basolateral cell membrane. Its subcellular location is the cytoplasm. The protein resides in the myofibril. It localises to the sarcomere. It is found in the m line. The protein localises to the cell junction. Its subcellular location is the focal adhesion. Integrin alpha ina-1/beta pat-3 is a receptor for laminin. Integrin alpha pat-2/beta pat-3 recognizes the sequence R-G-D in its ligands. Plays a role in cell migration, morphogenesis and probably in cell-cell interactions. During gonad morphogenesis, involved in distal tip cell (DTC)-mediated guidance of gonad elongation, in maintaining their sharp tapering morphology and in their migration. Component of an integrin containing attachment complex, which is required for muscle development and maintenance. Involved in the assembly of dense bodies and M lines during body wall muscle embryonic development by recruiting one of their components, cpna-1, to integrin-mediated attachment sites. May play a similar role in the assembly of dense bodies in gonadal myoepithelial sheath cells. Probably by acting as a receptor for apoptotic cells, plays a role in the clearance of apoptotic cells during mid-embryogenesis. Required for ovulation. Dephosphorylated, probably within the alpha pat-2/beta pat-3 integrin receptor complex, by the phosphatase dep-1, which leads to down-stream effects including the negative regulation of let-23 signaling and vulval induction. When unphosphosphorylated, recruits the cytoplasmic adapter protein tln-1 to the plasma membrane of secondary vulval precursor cells. This promotes the linking of focal adhesion sites to the F-actin cytoskeleton, and it also acts to restrict the mobility of the let-23 receptor on the plasma membrane of vulval cells which thereby attenuates let-23 signaling. Plays a role in axon regeneration after injury. This is Integrin beta pat-3 from Caenorhabditis elegans.